The primary structure comprises 48 residues: DNA-directed RNA polymerase subunit Rpo12 (48 aa).

Residues cysteine 9, cysteine 26, and cysteine 29 each contribute to the Zn(2+) site.

The protein belongs to the archaeal Rpo12/eukaryotic RPC10 RNA polymerase subunit family. Part of the RNA polymerase complex. Zn(2+) serves as cofactor.

It is found in the cytoplasm. It carries out the reaction RNA(n) + a ribonucleoside 5'-triphosphate = RNA(n+1) + diphosphate. Functionally, DNA-dependent RNA polymerase (RNAP) catalyzes the transcription of DNA into RNA using the four ribonucleoside triphosphates as substrates. In Saccharolobus islandicus (strain Y.N.15.51 / Yellowstone #2) (Sulfolobus islandicus), this protein is DNA-directed RNA polymerase subunit Rpo12.